We begin with the raw amino-acid sequence, 39 residues long: Mu-like prophage FluMu protein com (39 aa).

Belongs to the com family.

In Haemophilus influenzae (strain ATCC 51907 / DSM 11121 / KW20 / Rd), this protein is Mu-like prophage FluMu protein com.